We begin with the raw amino-acid sequence, 200 residues long: uncharacterized protein (200 aa).

This is an uncharacterized protein from Methanocaldococcus jannaschii (strain ATCC 43067 / DSM 2661 / JAL-1 / JCM 10045 / NBRC 100440) (Methanococcus jannaschii).